A 250-amino-acid polypeptide reads, in one-letter code: uncharacterized protein (250 aa).

Belongs to the carbohydrate kinase PfkB family.

This is an uncharacterized protein from Archaeoglobus fulgidus (strain ATCC 49558 / DSM 4304 / JCM 9628 / NBRC 100126 / VC-16).